The primary structure comprises 266 residues: Phosphatidate cytidylyltransferase (266 aa).

Helical transmembrane passes span 16-36, 52-72, 78-98, 101-121, 125-145, 164-184, 186-206, and 237-257; these read FVLI…LFWA, LFQV…WVAA, PIEC…YQKA, SEAI…FGVY, GAVA…GAFF, LEGA…VGMG, LSGG…VAVF, and LDSM…LEIW.

It belongs to the CDS family.

The protein resides in the cell inner membrane. It catalyses the reaction a 1,2-diacyl-sn-glycero-3-phosphate + CTP + H(+) = a CDP-1,2-diacyl-sn-glycerol + diphosphate. It participates in phospholipid metabolism; CDP-diacylglycerol biosynthesis; CDP-diacylglycerol from sn-glycerol 3-phosphate: step 3/3. This is Phosphatidate cytidylyltransferase (cdsA) from Helicobacter pylori (strain ATCC 700392 / 26695) (Campylobacter pylori).